A 554-amino-acid polypeptide reads, in one-letter code: Glucose-6-phosphate isomerase (554 aa).

Glu359 functions as the Proton donor in the catalytic mechanism. Catalysis depends on residues His390 and Lys518.

The protein belongs to the GPI family.

It localises to the cytoplasm. The catalysed reaction is alpha-D-glucose 6-phosphate = beta-D-fructose 6-phosphate. The protein operates within carbohydrate biosynthesis; gluconeogenesis. Its pathway is carbohydrate degradation; glycolysis; D-glyceraldehyde 3-phosphate and glycerone phosphate from D-glucose: step 2/4. Its function is as follows. Catalyzes the reversible isomerization of glucose-6-phosphate to fructose-6-phosphate. In Pseudomonas putida (strain GB-1), this protein is Glucose-6-phosphate isomerase.